Reading from the N-terminus, the 110-residue chain is Large ribosomal subunit protein uL22 (110 aa).

This sequence belongs to the universal ribosomal protein uL22 family. In terms of assembly, part of the 50S ribosomal subunit.

Functionally, this protein binds specifically to 23S rRNA; its binding is stimulated by other ribosomal proteins, e.g. L4, L17, and L20. It is important during the early stages of 50S assembly. It makes multiple contacts with different domains of the 23S rRNA in the assembled 50S subunit and ribosome. Its function is as follows. The globular domain of the protein is located near the polypeptide exit tunnel on the outside of the subunit, while an extended beta-hairpin is found that lines the wall of the exit tunnel in the center of the 70S ribosome. The protein is Large ribosomal subunit protein uL22 of Haemophilus ducreyi (strain 35000HP / ATCC 700724).